Here is a 404-residue protein sequence, read N- to C-terminus: Cytoplasmic tRNA 2-thiolation protein 2 (404 aa).

This sequence belongs to the CTU2/NCS2 family.

It localises to the cytoplasm. The protein operates within tRNA modification; 5-methoxycarbonylmethyl-2-thiouridine-tRNA biosynthesis. In terms of biological role, plays a central role in 2-thiolation of mcm(5)S(2)U at tRNA wobble positions of tRNA(Lys), tRNA(Glu) and tRNA(Gln). May act by forming a heterodimer with NCS6/CTU1 that ligates sulfur from thiocarboxylated URM1 onto the uridine of tRNAs at wobble position. The sequence is that of Cytoplasmic tRNA 2-thiolation protein 2 from Drosophila erecta (Fruit fly).